Reading from the N-terminus, the 59-residue chain is Large ribosomal subunit protein bL32 (59 aa).

It belongs to the bacterial ribosomal protein bL32 family.

The protein is Large ribosomal subunit protein bL32 of Synechococcus sp. (strain JA-2-3B'a(2-13)) (Cyanobacteria bacterium Yellowstone B-Prime).